The sequence spans 115 residues: Parathyroid hormone (115 aa).

The signal sequence occupies residues 1–25 (MMSAKDTVKVMVVMLAICFLARSDG). A propeptide spanning residues 26–31 (KPIKKR) is cleaved from the precursor. Positions 51–69 (RVEWLRKKLQDVHNFVALG) are important for receptor binding. Positions 75-98 (RDGGSQRPRKKEDNVLVESHQKSL) are disordered.

Belongs to the parathyroid hormone family. Interacts with PTH1R (via N-terminal extracellular domain).

It is found in the secreted. In terms of biological role, parathyroid hormone elevates calcium level by dissolving the salts in bone and preventing their renal excretion. Acts by binding to its receptor, PTH1R, activating G protein-coupled receptor signaling. Stimulates [1-14C]-2-deoxy-D-glucose (2DG) transport and glycogen synthesis in osteoblastic cells. This is Parathyroid hormone (PTH) from Sus scrofa (Pig).